We begin with the raw amino-acid sequence, 105 residues long: Small ribosomal subunit protein uS10 (105 aa).

This sequence belongs to the universal ribosomal protein uS10 family. As to quaternary structure, part of the 30S ribosomal subunit.

Involved in the binding of tRNA to the ribosomes. The chain is Small ribosomal subunit protein uS10 from Rickettsia felis (strain ATCC VR-1525 / URRWXCal2) (Rickettsia azadi).